A 156-amino-acid polypeptide reads, in one-letter code: Putative pre-16S rRNA nuclease (156 aa).

It belongs to the YqgF nuclease family.

The protein resides in the cytoplasm. Could be a nuclease involved in processing of the 5'-end of pre-16S rRNA. This is Putative pre-16S rRNA nuclease from Streptomyces avermitilis (strain ATCC 31267 / DSM 46492 / JCM 5070 / NBRC 14893 / NCIMB 12804 / NRRL 8165 / MA-4680).